Here is a 196-residue protein sequence, read N- to C-terminus: Probable malonic semialdehyde reductase RutE (196 aa).

It belongs to the nitroreductase family. HadB/RutE subfamily. FMN serves as cofactor.

It carries out the reaction 3-hydroxypropanoate + NADP(+) = 3-oxopropanoate + NADPH + H(+). Its function is as follows. May reduce toxic product malonic semialdehyde to 3-hydroxypropionic acid, which is excreted. The polypeptide is Probable malonic semialdehyde reductase RutE (Escherichia coli O8 (strain IAI1)).